The sequence spans 200 residues: Recombination protein RecR (200 aa).

Residues 57–72 (CRQCRTLTEQELCPQC) form a C4-type zinc finger. A Toprim domain is found at 80-175 (TQLCVVEGPM…VASRIAHGVP (96 aa)).

It belongs to the RecR family.

In terms of biological role, may play a role in DNA repair. It seems to be involved in an RecBC-independent recombinational process of DNA repair. It may act with RecF and RecO. The chain is Recombination protein RecR from Pseudomonas putida (strain W619).